The primary structure comprises 439 residues: ATP-dependent DNA helicase dda (439 aa).

Residue 32–39 (GPAGTGKT) participates in ATP binding.

Monomer. Interacts with UvsX and gene 32 protein.

It catalyses the reaction Couples ATP hydrolysis with the unwinding of duplex DNA at the replication fork by translocating in the 5'-3' direction. This creates two antiparallel DNA single strands (ssDNA). The leading ssDNA polymer is the template for DNA polymerase III holoenzyme which synthesizes a continuous strand.. The enzyme catalyses ATP + H2O = ADP + phosphate + H(+). In terms of biological role, DNA helicase that stimulates viral DNA replication and recombination. Plays a role in T4 DNA replication initiation by selecting and activating DNA origins. Acts by dissociating and reassociating with the DNA molecule being unwound. Unwinds DNA as a monomer in a 5'-3' direction at a rate of 250 bp/s and can efficiently displace proteins from the DNA. The polypeptide is ATP-dependent DNA helicase dda (dda) (Enterobacteria phage T4 (Bacteriophage T4)).